The primary structure comprises 340 residues: Lipopolysaccharide core biosynthesis glycosyltransferase LpsE (340 aa).

The protein belongs to the glycosyltransferase group 1 family. Glycosyltransferase 4 subfamily.

It participates in bacterial outer membrane biogenesis; LPS core biosynthesis. In Rhizobium meliloti (strain 1021) (Ensifer meliloti), this protein is Lipopolysaccharide core biosynthesis glycosyltransferase LpsE (lpsE).